Reading from the N-terminus, the 381-residue chain is NF-kappa-B inhibitor-like protein 1 (381 aa).

The tract at residues 1–32 (MSNPSPQAPEEEASTSVCRPQSSMASVSRRHR) is disordered. The span at 14-26 (STSVCRPQSSMAS) shows a compositional bias: polar residues. 2 ANK repeats span residues 64–93 (GQPPPLHRACARHDAPALCLLLRLGADPAH) and 97–133 (HGDTALHAAARQGPNAYTDFFLPLLSRCPSAMGIKNK). 3 disordered regions span residues 129-166 (GIKNKDGETPGQILGWGPPWDSAEEEEDEEVSKEREWR), 186-242 (DDAS…QEEE), and 257-294 (LCESRARRAQEAQGDRGPAPPRARPRAEHPRGAGRGSL). Position 150 is a phosphoserine (S150). Positions 150-159 (SAEEEEDEEV) are enriched in acidic residues. 2 stretches are compositionally biased toward basic and acidic residues: residues 204–228 (RLAREHAQKQRRQQLEAEGSRRPPR) and 257–270 (LCESRARRAQEAQG).

Interacts with CACTIN (via N-terminal domain); the interaction occurs in a pro-inflammatory-independent manner.

It localises to the nucleus. Its function is as follows. Involved in the regulation of innate immune response. Acts as negative regulator of Toll-like receptor and interferon-regulatory factor (IRF) signaling pathways. Contributes to the negative regulation of transcriptional activation of NF-kappa-B target genes in response to endogenous pro-inflammatory stimuli. This is NF-kappa-B inhibitor-like protein 1 (Nfkbil1) from Rattus norvegicus (Rat).